The following is a 365-amino-acid chain: MAQQTPLYEQHNLCGARMVDFHGWMMPLHYGSQIDEHHAVRNDAGMFDVSHMTIVDLRGARTREFLRYLLANDVAKLTQPGKALYTAMLNASGGVIDDLIVYFMTEDYFRLVVNSATREKDLAWINEHAEPYGVSVTVRDDLSLIAVQGPNAKAKAATLFTDAQRKATEGMKPFFGVQADDLFIATTGYTGEAGYEIAMPNEKAAGFWSQLVEAGVKPCGLGARDTLRLEAGMNLYGQEMDEGVSPLAANMGWTIAWQPEDRAFIGRDALEAQRENGTEQLVGLVMTEKGVLRGELPVRFTDDQGNAREGIITSGTFSPTLGYSIALARVPAGIGDTAIVQIRNREMPVKVTKPIFVRAGKPVTQ.

Belongs to the GcvT family. As to quaternary structure, the glycine cleavage system is composed of four proteins: P, T, L and H.

The catalysed reaction is N(6)-[(R)-S(8)-aminomethyldihydrolipoyl]-L-lysyl-[protein] + (6S)-5,6,7,8-tetrahydrofolate = N(6)-[(R)-dihydrolipoyl]-L-lysyl-[protein] + (6R)-5,10-methylene-5,6,7,8-tetrahydrofolate + NH4(+). Its function is as follows. The glycine cleavage system catalyzes the degradation of glycine. The chain is Aminomethyltransferase from Cronobacter sakazakii (strain ATCC BAA-894) (Enterobacter sakazakii).